The chain runs to 92 residues: RNA-binding protein Hfq (92 aa).

The region spanning 9 to 68 is the Sm domain; it reads DPFLNALRRERVPVSIYLVNGIKLQGQVESFDQFVILLKNTVSQMVYKHAISTVVPSRPF. Positions 73–82 are enriched in polar residues; it reads HQATNAQAGY. The disordered stretch occupies residues 73 to 92; that stretch reads HQATNAQAGYNAQHDDGDEK.

It belongs to the Hfq family. In terms of assembly, homohexamer.

Functionally, RNA chaperone that binds small regulatory RNA (sRNAs) and mRNAs to facilitate mRNA translational regulation in response to envelope stress, environmental stress and changes in metabolite concentrations. Also binds with high specificity to tRNAs. This Shewanella pealeana (strain ATCC 700345 / ANG-SQ1) protein is RNA-binding protein Hfq.